The primary structure comprises 180 residues: Large ribosomal subunit protein uL5 (180 aa).

The protein belongs to the universal ribosomal protein uL5 family. Part of the 50S ribosomal subunit; part of the 5S rRNA/L5/L18/L25 subcomplex. Contacts the 5S rRNA and the P site tRNA. Forms a bridge to the 30S subunit in the 70S ribosome.

Functionally, this is one of the proteins that bind and probably mediate the attachment of the 5S RNA into the large ribosomal subunit, where it forms part of the central protuberance. In the 70S ribosome it contacts protein S13 of the 30S subunit (bridge B1b), connecting the 2 subunits; this bridge is implicated in subunit movement. Contacts the P site tRNA; the 5S rRNA and some of its associated proteins might help stabilize positioning of ribosome-bound tRNAs. This Mesoplasma florum (strain ATCC 33453 / NBRC 100688 / NCTC 11704 / L1) (Acholeplasma florum) protein is Large ribosomal subunit protein uL5.